A 467-amino-acid chain; its full sequence is Ammonium transporter Rh type C (467 aa).

Topologically, residues 1–9 are cytoplasmic; it reads MAWNTNLRW. The chain crosses the membrane as a helical span at residues 10 to 30; sequence RLPLLCLVLEVAMVVLFGLFV. The Extracellular segment spans residues 31 to 61; the sequence is RYSPDADSSWSNEKRKGNITSDLENEFYYRY. N-linked (GlcNAc...) asparagine glycosylation occurs at asparagine 48. The helical transmembrane segment at 62–82 threads the bilayer; that stretch reads PSFQDVHVMVFLGFGFLMTFL. Over 83 to 86 the chain is Cytoplasmic; the sequence is QRYG. The chain crosses the membrane as a helical span at residues 87 to 107; the sequence is YCALGFNFLLAALGVQWALLM. At 108–131 the chain is on the extracellular side; it reads QGWFQYTKDRLILLGIKNLIDADS. Helical transmembrane passes span 132–152 and 153–173; these read CVASVCVAFGAVLGKVSPVQM and LLMTFFQVALFSANEFLLLHV. Residues 174 to 179 are Extracellular-facing; sequence LEVKDA. The helical transmembrane segment at 180-200 threads the bilayer; the sequence is GGSITIHIFGAYFGLTVTWIL. The Cytoplasmic segment spans residues 201 to 219; sequence YRHNLDHSRERQSSVYHSN. A helical membrane pass occupies residues 220-240; that stretch reads LFAMIGTLFLWIYWPSFNSAM. Topologically, residues 241-251 are extracellular; sequence SNYGDAQHRAA. Residues 252–272 form a helical membrane-spanning segment; that stretch reads INTYCSLAASVLTSVAMSSVL. Topologically, residues 273-282 are cytoplasmic; the sequence is HKKGKLDMVH. The chain crosses the membrane as a helical span at residues 283–303; the sequence is IQNATLAGGVGVGTAAEMMLM. Position 304 (proline 304) is a topological domain, extracellular. The chain crosses the membrane as a helical span at residues 305–325; sequence YGALIVGFICGAVSTLGFVYL. At 326–343 the chain is on the cytoplasmic side; sequence TPFLESRLRIQDTCGIHN. Residues 344 to 364 form a helical membrane-spanning segment; sequence LHGIPGLIGAIVGAVTAAYAS. The Extracellular segment spans residues 365-391; it reads PDGDRGFVYPFGFHNEKDEKVQGRFQA. Residues 392–412 form a helical membrane-spanning segment; the sequence is FGLLLTLAIAMVGGTIMGLIL. The Cytoplasmic segment spans residues 413 to 467; that stretch reads KLPFWGQAMDEDCFDDSIYWEMHEEKSSSPEDHTHKPSVPTEPVEQPTSSATLAP. Over residues 436–447 the composition is skewed to basic and acidic residues; it reads EEKSSSPEDHTH. A disordered region spans residues 436-467; the sequence is EEKSSSPEDHTHKPSVPTEPVEQPTSSATLAP. Residues 458–467 show a composition bias toward polar residues; it reads QPTSSATLAP.

Belongs to the ammonium transporter (TC 2.A.49) family. Rh subfamily. As to quaternary structure, homotrimer. In terms of processing, N-glycosylated.

It localises to the cell membrane. The protein resides in the apical cell membrane. It catalyses the reaction NH4(+)(in) = NH4(+)(out). The catalysed reaction is methylamine(out) = methylamine(in). It carries out the reaction CO2(out) = CO2(in). Its function is as follows. Ammonium transporter involved in the maintenance of acid-base homeostasis. Transports ammonium and its related derivative methylammonium across the plasma membrane of epithelial cells likely contributing to renal transepithelial ammonia transport and ammonia metabolism. Postulated to primarily mediate an electroneutral bidirectional transport of NH3 ammonia species according to a mechanism that implies interaction of an NH4(+) ion with acidic residues of the pore entry followed by dissociation of NH4(+) into NH3 and H(+). As a result NH3 transits through the central pore and is protonated on the extracellular side reforming NH4(+). May act as a CO2 channel providing for renal acid secretion. This chain is Ammonium transporter Rh type C (RHCG), found in Oryctolagus cuniculus (Rabbit).